Reading from the N-terminus, the 434-residue chain is Chaperone SurA (434 aa).

The first 22 residues, Met1 to Ala22, serve as a signal peptide directing secretion. 2 consecutive PpiC domains span residues Asp173–Asp274 and Ile283–Glu383.

The protein resides in the periplasm. It carries out the reaction [protein]-peptidylproline (omega=180) = [protein]-peptidylproline (omega=0). Chaperone involved in the correct folding and assembly of outer membrane proteins. Recognizes specific patterns of aromatic residues and the orientation of their side chains, which are found more frequently in integral outer membrane proteins. May act in both early periplasmic and late outer membrane-associated steps of protein maturation. This Shewanella sp. (strain MR-7) protein is Chaperone SurA.